A 345-amino-acid polypeptide reads, in one-letter code: MDSEDIPDFSSLKEETAYWKELSLKYKQSFQEARDELVEFQEGSRELEAELEAQLVQAEQRNRDLQADNQRLKYEVEALKEKLEHQYAQSYKQVSVLEDDLSQTRAIKEQLHKYVRELEQANDDLERAKRATIVSLEDFEQRLNQAIERNAFLESELDEKESLLVSVQRLKDEARDLRQELAVRERQQEVTRKSAPSSPTLDCEKMDSAVQASLSLPATPVGKGTENTFPSPKAIPNGFGTSPLTPSARISALNIVGDLLRKVGALESKLAACRNFAKDQASRKSYISGNVNCGVLNGNGTKFSRSGHTSFFDKGAVNGFDPAPPPPGLGSSRPSSAPGMLPLSV.

The stretch at 28 to 190 forms a coiled coil; sequence QSFQEARDEL…LAVRERQQEV (163 aa). Positions 56 to 166 are self-association; it reads VQAEQRNRDL…LDEKESLLVS (111 aa). The interval 64 to 189 is interaction with KATNB1; the sequence is DLQADNQRLK…ELAVRERQQE (126 aa). The tract at residues 114–133 is required for interaction with PAFAH1B1; the sequence is YVRELEQANDDLERAKRATI. The tract at residues 175–345 is interaction with CENPF; the sequence is RDLRQELAVR…SAPGMLPLSV (171 aa). Positions 189-256 are interaction with YWHAE; sequence EVTRKSAPSS…SARISALNIV (68 aa). The interval 191-345 is interaction with NEFL; it reads TRKSAPSSPT…SAPGMLPLSV (155 aa). Residues 195 to 256 form an interaction with KATNA1 region; sequence APSSPTLDCE…SARISALNIV (62 aa). A Phosphoserine modification is found at Ser-215. A Phosphothreonine; by CDK1 and MAPK1 modification is found at Thr-219. At Ser-231 the chain carries Phosphoserine. Positions 241–280 are interaction with DISC1; sequence TSPLTPSARISALNIVGDLLRKVGALESKLAACRNFAKDQ. Residue Ser-242 is modified to Phosphoserine; by CDK1. The residue at position 245 (Thr-245) is a Phosphothreonine; by CDK1 and MAPK1. The segment at 256–291 is required for localization to the centrosome and interaction with dynein, dynactin, tubulin gamma, PCM1 and PCNT; it reads VGDLLRKVGALESKLAACRNFAKDQASRKSYISGNV. Cys-273 carries S-palmitoyl cysteine; by ZDHHC2, ZDHHC3 and ZDHHC7 lipidation. Positions 315–345 are disordered; sequence GAVNGFDPAPPPPGLGSSRPSSAPGMLPLSV. The segment covering 329–339 has biased composition (low complexity); that stretch reads LGSSRPSSAPG. Ser-344 carries the phosphoserine modification.

Belongs to the nudE family. Self-associates. Interacts with DISC1, dynein, dynactin, tubulin gamma, KATNA1, KATNB1, microtubules, PAFAH1B1, PCM1, PCNT, and YWHAE. Interacts directly with NEFL and indirectly with NEFH. Interacts (via C-terminus) with CENPF. Interacts with ZNF365. Interacts with PLEKHM1 (via N- and C-terminus). Interacts with GTP-bound RAB9A; the interaction may lead to RAB9A-dynein motor tethering. Post-translationally, phosphorylated in mitosis. Can be phosphorylated by CDK1, CDK5 and MAPK1. Phosphorylation by CDK5 promotes interaction with KATNA1 and YWHAE. In terms of processing, palmitoylation at Cys-273 reduces affinity for dynein.

The protein resides in the cytoplasm. Its subcellular location is the cytoskeleton. The protein localises to the microtubule organizing center. It is found in the centrosome. It localises to the chromosome. The protein resides in the centromere. Its subcellular location is the kinetochore. The protein localises to the spindle. Its function is as follows. Required for organization of the cellular microtubule array and microtubule anchoring at the centrosome. May regulate microtubule organization at least in part by targeting the microtubule severing protein KATNA1 to the centrosome. Also positively regulates the activity of the minus-end directed microtubule motor protein dynein. May enhance dynein-mediated microtubule sliding by targeting dynein to the microtubule plus ends. Required for several dynein- and microtubule-dependent processes such as the maintenance of Golgi integrity, the centripetal motion of secretory vesicles and the coupling of the nucleus and centrosome. Also required during brain development for the migration of newly formed neurons from the ventricular/subventricular zone toward the cortical plate. Plays a role, together with DISC1, in the regulation of neurite outgrowth. Required for mitosis in some cell types but appears to be dispensible for mitosis in cortical neuronal progenitors, which instead requires NDE1. Facilitates the polymerization of neurofilaments from the individual subunits NEFH and NEFL. Positively regulates lysosome peripheral distribution and ruffled border formation in osteoclasts. Plays a role, together with DISC1, in the regulation of neurite outgrowth. May act as a RAB9A/B effector that tethers RAB9-associated late endosomes to the dynein motor for their retrograde transport to the trans-Golgi network. This is Nuclear distribution protein nudE-like 1 (NDEL1) from Pongo abelii (Sumatran orangutan).